Here is a 588-residue protein sequence, read N- to C-terminus: MSGSQTVSVIGYTKMAPQSPPATVNELWFIDTQAMFQNYANLRSFSKSNSTETQTTIGGVVFGRKARKQVIHVFFAYAEDLTESNLQFLESSLSSDIELVGNVNIDGQSTLIGNGTFTLQLSSKMLENKNTSEFLDQNVIFNNDHISMEGASCVSKVGFEWSLRAGREQEDVKSAAERLSMASFRFSYLNAEHELVIREHKPETAKQKYMDKFTKGALPYKDVIEFTAMQSLTRDTSNDTEDQKLVPTVKVTKDNKHFTRLVTIGEVVFPAYFGDSSFDLYKRAREALNRRANNTMMVTVNGIRSGRGVTTTTSATYLPPGWVSLLHLQLPSKWTENEKRNYRIRLHKLFNLPSSKPCLRLSQSLPLHSESVRLTNKKLIREPHLSISNYQPAGVVTAVKGPYNYHHYMQDGIDDSGWGCAYRSFQTIWSWFILNGYTDKPVPSHRDIQQALVNIGDKEQKFVGSRQWIGSTEISYVLNELLKLECRFIATNSGAEVVERARELARHFETSGTPVMIGGNMLAHTILGVDFNEMTGETKFLILDPHYTGSEDIKTITSKGWCAWKPASFWSADHFYNMVLAQPPTDSI.

Active-site residues include C420, D544, and H546.

This sequence belongs to the peptidase C78 family. As to quaternary structure, interacts with odr-4.

The protein localises to the endoplasmic reticulum membrane. The protein resides in the cytoplasm. It localises to the perinuclear region. Its function is as follows. Thiol protease which recognizes and hydrolyzes the peptide bond at the C-terminal Gly of ufm-1, a ubiquitin-like modifier protein bound to a number of target proteins. Required, with oct-4, for the localization of a subset of 7 transmembrane domain odorant receptors, including odr-10, to the cilia of olfactory neurons AWA and AWC. Operates in aggregation behavior, and responses to oxygen levels. The polypeptide is Ufm1-specific protease (Caenorhabditis briggsae).